The sequence spans 343 residues: L-threonine 3-dehydrogenase (343 aa).

Residue cysteine 38 coordinates Zn(2+). Active-site charge relay system residues include threonine 40 and histidine 43. Zn(2+)-binding residues include histidine 63, glutamate 64, cysteine 93, cysteine 96, cysteine 99, and cysteine 107. NAD(+) is bound by residues isoleucine 175, aspartate 195, arginine 200, 262-264, and 286-287; these read LGI and IY.

The protein belongs to the zinc-containing alcohol dehydrogenase family. Homotetramer. Zn(2+) serves as cofactor.

The protein localises to the cytoplasm. The enzyme catalyses L-threonine + NAD(+) = (2S)-2-amino-3-oxobutanoate + NADH + H(+). It participates in amino-acid degradation; L-threonine degradation via oxydo-reductase pathway; glycine from L-threonine: step 1/2. Catalyzes the NAD(+)-dependent oxidation of L-threonine to 2-amino-3-ketobutyrate. This Pectobacterium carotovorum subsp. carotovorum (strain PC1) protein is L-threonine 3-dehydrogenase.